Consider the following 66-residue polypeptide: Large ribosomal subunit protein uL29 (66 aa).

This sequence belongs to the universal ribosomal protein uL29 family.

In Deinococcus deserti (strain DSM 17065 / CIP 109153 / LMG 22923 / VCD115), this protein is Large ribosomal subunit protein uL29.